We begin with the raw amino-acid sequence, 252 residues long: Ribosomal RNA small subunit methyltransferase NEP1 (252 aa).

S-adenosyl-L-methionine is bound by residues Met-176, Gly-209, Gly-214, and 227–232 (ISNYPL).

The protein belongs to the class IV-like SAM-binding methyltransferase superfamily. RNA methyltransferase NEP1 family. In terms of assembly, homodimer. Part of the small subunit (SSU) processome, composed of more than 70 proteins and the RNA chaperone small nucleolar RNA (snoRNA) U3.

The protein resides in the nucleus. Its subcellular location is the nucleolus. It catalyses the reaction a pseudouridine in rRNA + S-adenosyl-L-methionine = an N(1)-methylpseudouridine in rRNA + S-adenosyl-L-homocysteine + H(+). In terms of biological role, S-adenosyl-L-methionine-dependent pseudouridine N(1)-methyltransferase that methylates a pseudouridine in 18S rRNA. Involved the biosynthesis of the hypermodified N1-methyl-N3-(3-amino-3-carboxypropyl) pseudouridine (m1acp3-Psi) conserved in eukaryotic 18S rRNA. Also has an essential role in 40S ribosomal subunit biogenesis independent on its methyltransferase activity, facilitating the incorporation of ribosomal protein S19 during the formation of pre-ribosomes. Its function is as follows. S-adenosyl-L-methionine-dependent pseudouridine N(1)-methyltransferase that methylates pseudouridine at position in 18S rRNA. Involved the biosynthesis of the hypermodified N1-methyl-N3-(3-amino-3-carboxypropyl) pseudouridine (m1acp3-Psi) conserved in eukaryotic 18S rRNA. Is not able to methylate uridine at this position. Also has an essential role in 40S ribosomal subunit biogenesis independent on its methyltransferase activity, facilitating the incorporation of ribosomal protein S19 during the formation of pre-ribosomes. Part of the small subunit (SSU) processome, first precursor of the small eukaryotic ribosomal subunit. During the assembly of the SSU processome in the nucleolus, many ribosome biogenesis factors, an RNA chaperone and ribosomal proteins associate with the nascent pre-rRNA and work in concert to generate RNA folding, modifications, rearrangements and cleavage as well as targeted degradation of pre-ribosomal RNA by the RNA exosome. This chain is Ribosomal RNA small subunit methyltransferase NEP1, found in Drosophila melanogaster (Fruit fly).